Here is a 435-residue protein sequence, read N- to C-terminus: Apparent malate synthase (435 aa).

Glutamate 159 and asparagine 180 together coordinate Mg(2+). Substrate is bound at residue glutamate 159.

Belongs to the HpcH/HpaI aldolase family. Mg(2+) is required as a cofactor. Requires Mn(2+) as cofactor. Co(2+) serves as cofactor. The cofactor is Ca(2+).

The enzyme catalyses (S)-malyl-CoA = glyoxylate + acetyl-CoA. It carries out the reaction (S)-malyl-CoA + H2O = (S)-malate + CoA + H(+). In terms of biological role, involved in the methylaspartate cycle. Catalyzes the biosynthesis of malate in two steps. In the first reaction acetyl-CoA is condensed reversibly with glyoxylate to form (S)-malyl-CoA. In the second reaction (S)-malyl-CoA is hydrolyzed to malate and CoA. It can also catalyze the condensation of propionyl-CoA with glyoxylate and of acetyl-CoA with pyruvate, however the CoA-ester hydrolysis reaction is highly specific for (S)-malyl-CoA. The sequence is that of Apparent malate synthase (aceB) from Haloarcula marismortui (strain ATCC 43049 / DSM 3752 / JCM 8966 / VKM B-1809) (Halobacterium marismortui).